Consider the following 371-residue polypeptide: Germination protease (371 aa).

A propeptide spanning residues 1-16 (MEKQKLDLSAYQIRTD) is cleaved from the precursor.

The protein belongs to the peptidase A25 family. As to quaternary structure, homotetramer. In terms of processing, autoproteolytically processed. The inactive tetrameric zymogen termed p46 autoprocesses to a smaller form termed p41, which is active only during spore germination.

The catalysed reaction is Endopeptidase action with P4 Glu or Asp, P1 preferably Glu &gt; Asp, P1' hydrophobic and P2' Ala.. Initiates the rapid degradation of small, acid-soluble proteins during spore germination. This chain is Germination protease, found in Bacillus pumilus (strain SAFR-032).